The sequence spans 179 residues: Large ribosomal subunit protein uL5 (179 aa).

Belongs to the universal ribosomal protein uL5 family. Part of the 50S ribosomal subunit; part of the 5S rRNA/L5/L18/L25 subcomplex. Contacts the 5S rRNA and the P site tRNA. Forms a bridge to the 30S subunit in the 70S ribosome.

Its function is as follows. This is one of the proteins that bind and probably mediate the attachment of the 5S RNA into the large ribosomal subunit, where it forms part of the central protuberance. In the 70S ribosome it contacts protein S13 of the 30S subunit (bridge B1b), connecting the 2 subunits; this bridge is implicated in subunit movement. Contacts the P site tRNA; the 5S rRNA and some of its associated proteins might help stabilize positioning of ribosome-bound tRNAs. In Clostridium novyi (strain NT), this protein is Large ribosomal subunit protein uL5.